The primary structure comprises 257 residues: Diacetyl reductase [(S)-acetoin forming] (257 aa).

Ile-6–Val-30 contributes to the NAD(+) binding site. Ser-139 serves as a coordination point for substrate. Residue Tyr-152 is the Proton acceptor of the active site. Lys-156 is a catalytic residue.

Belongs to the short-chain dehydrogenases/reductases (SDR) family.

The catalysed reaction is (S)-acetoin + NAD(+) = diacetyl + NADH + H(+). Catalyzes the irreversible reduction of 2,3-butanediol to (S)-acetoin in the presence of NADH. The polypeptide is Diacetyl reductase [(S)-acetoin forming] (butA) (Staphylococcus epidermidis (strain ATCC 35984 / DSM 28319 / BCRC 17069 / CCUG 31568 / BM 3577 / RP62A)).